A 610-amino-acid chain; its full sequence is Methionine--tRNA ligase (610 aa).

The short motif at 12–22 (PYANGPRHIGH) is the 'HIGH' region element. Positions 144, 147, 157, and 160 each coordinate Zn(2+). Residues 348–352 (KFSSS) carry the 'KMSKS' region motif. Ser-351 is a binding site for ATP.

The protein belongs to the class-I aminoacyl-tRNA synthetase family. MetG type 1 subfamily. Monomer. It depends on Zn(2+) as a cofactor.

The protein resides in the cytoplasm. It carries out the reaction tRNA(Met) + L-methionine + ATP = L-methionyl-tRNA(Met) + AMP + diphosphate. Is required not only for elongation of protein synthesis but also for the initiation of all mRNA translation through initiator tRNA(fMet) aminoacylation. The sequence is that of Methionine--tRNA ligase from Corynebacterium diphtheriae (strain ATCC 700971 / NCTC 13129 / Biotype gravis).